Consider the following 361-residue polypeptide: Ribosomal RNA large subunit methyltransferase M (361 aa).

S-adenosyl-L-methionine is bound by residues serine 193, 226–229 (CPGG), aspartate 245, aspartate 265, and aspartate 283. The active-site Proton acceptor is lysine 312.

It belongs to the class I-like SAM-binding methyltransferase superfamily. RNA methyltransferase RlmE family. RlmM subfamily. As to quaternary structure, monomer.

The protein resides in the cytoplasm. It carries out the reaction cytidine(2498) in 23S rRNA + S-adenosyl-L-methionine = 2'-O-methylcytidine(2498) in 23S rRNA + S-adenosyl-L-homocysteine + H(+). Functionally, catalyzes the 2'-O-methylation at nucleotide C2498 in 23S rRNA. In Histophilus somni (strain 2336) (Haemophilus somnus), this protein is Ribosomal RNA large subunit methyltransferase M.